Consider the following 307-residue polypeptide: Malate dehydrogenase (307 aa).

Residues G8–G13 and D33 each bind NAD(+). Substrate is bound by residues R82 and R88. Residues N95 and V118–N120 contribute to the NAD(+) site. Residues N120 and R151 each coordinate substrate. The active-site Proton acceptor is H175.

Belongs to the LDH/MDH superfamily. MDH type 3 family.

It catalyses the reaction (S)-malate + NAD(+) = oxaloacetate + NADH + H(+). Functionally, catalyzes the reversible oxidation of malate to oxaloacetate. In Thioalkalivibrio sulfidiphilus (strain HL-EbGR7), this protein is Malate dehydrogenase.